We begin with the raw amino-acid sequence, 94 residues long: Small ribosomal subunit protein bS6 (94 aa).

The protein belongs to the bacterial ribosomal protein bS6 family.

In terms of biological role, binds together with bS18 to 16S ribosomal RNA. The sequence is that of Small ribosomal subunit protein bS6 from Alkaliphilus oremlandii (strain OhILAs) (Clostridium oremlandii (strain OhILAs)).